Here is a 154-residue protein sequence, read N- to C-terminus: ORF3b protein (154 aa).

The interval 80-138 (LQTLVLKMLHSSSLTSLLKTHRMCKYTQSTALQELLIQQWIQFMMSRRRLLACLCKHKK) is mitochondrial targeting signal. The tract at residues 134-154 (CKHKKVSTNLCTHSFRKKQVR) is nucleolar targeting. Positions 135 to 153 (KHKKVSTNLCTHSFRKKQV) match the Bipartite nuclear localization signal motif.

As to quaternary structure, interacts with host RUNX1 isoform b.

It localises to the host nucleus. Its subcellular location is the host nucleolus. It is found in the host mitochondrion. Induces host cell G0/G1 arrest and apoptosis. The polypeptide is ORF3b protein (Homo sapiens (Human)).